Here is a 2336-residue protein sequence, read N- to C-terminus: Voltage-dependent N-type calcium channel subunit alpha-1B (2336 aa).

The tract at residues 1–37 is disordered; sequence MVRFGDELGGRYGGTGGGERARGGGAGGAGGPGQGGL. The Cytoplasmic portion of the chain corresponds to 1–90; that stretch reads MVRFGDELGG…DNVVRKYAKR (90 aa). Positions 10–37 are enriched in gly residues; that stretch reads GRYGGTGGGERARGGGAGGAGGPGQGGL. At Arg22 the chain carries Omega-N-methylarginine. The I repeat unit spans residues 82–359; it reads NVVRKYAKRI…LVLGVLSGEF (278 aa). Residues 91-114 form a helical membrane-spanning segment; it reads ITEWPPFEYMILATIIANCIVLAL. Residues 115 to 131 are Extracellular-facing; sequence EQHLPDGDKTPMSERLD. Residues 132–152 form a helical membrane-spanning segment; that stretch reads DTEPYFIGIFCFEAGIKIIAL. Over 153-163 the chain is Cytoplasmic; the sequence is GFVFHKGSYLR. Residues 164 to 182 form a helical membrane-spanning segment; sequence NGWNVMDFVVVLTEILATA. Over 183 to 187 the chain is Extracellular; sequence GTDFD. A helical membrane pass occupies residues 188–211; it reads LRTLRAVRVLRPLKLVSGIPSLQV. Over 212–221 the chain is Cytoplasmic; sequence VLKSIMKAMV. The helical transmembrane segment at 222–244 threads the bilayer; the sequence is PLLQIGLLLFFAILMFAIIGLEF. The Extracellular portion of the chain corresponds to 245–331; that stretch reads YMGKFHKACF…NTNDAAGNTW (87 aa). Asn256 carries N-linked (GlcNAc...) asparagine glycosylation. Residues 332–356 form a helical membrane-spanning segment; the sequence is NWLYFIPLIIIGSFFMLNLVLGVLS. At 357–483 the chain is on the cytoplasmic side; the sequence is GEFAKERERV…FLIRRMVKAQ (127 aa). Positions 379-396 are binding to the beta subunit; that stretch reads QQIERELNGYLEWIFKAE. Phosphoserine is present on Ser411. 452–459 contributes to the ATP binding site; it reads ASLKSGKT. An II repeat occupies 469 to 713; it reads EKMFRFLIRR…VFLAIAVDNL (245 aa). A helical transmembrane segment spans residues 484–502; that stretch reads SFYWVVLCVVALNTLCVAM. The Extracellular portion of the chain corresponds to 503-512; the sequence is VHYNQPQRLT. A helical transmembrane segment spans residues 513 to 535; the sequence is TALYFAEFVFLGLFLTEMSLKMY. The Cytoplasmic portion of the chain corresponds to 536-545; sequence GLGPRSYFRS. A 1,2-diacyl-sn-glycero-3-phospho-(1D-myo-inositol-4,5-bisphosphate) is bound at residue Ser545. The helical transmembrane segment at 546–567 threads the bilayer; sequence SFNCFDFGVIVGSIFEVVWAAI. The Extracellular segment spans residues 568–574; sequence KPGTSFG. A helical membrane pass occupies residues 575–587; sequence ISVLRALRLLRIF. Positions 585 and 588 each coordinate a 1,2-diacyl-sn-glycero-3-phospho-(1D-myo-inositol-4,5-bisphosphate). Residues 588–605 are Cytoplasmic-facing; the sequence is KVTKYWNSLRNLVVSLLN. The helical transmembrane segment at 606–631 threads the bilayer; the sequence is SMKSIISLLFLLFLFIVVFALLGMQL. Residues 632–683 lie on the Extracellular side of the membrane; sequence FGGQFNFQDETPTTNFDTFPAAILTVFQILTGEDWNAVMYHGIESQGGVSKG. The chain crosses the membrane as a helical span at residues 684 to 710; that stretch reads MFSSFYFIVLTLFGNYTLLNVFLAIAV. Residues 711–1149 lie on the Cytoplasmic side of the membrane; it reads DNLANAQELT…FCHYIVTMRY (439 aa). Phosphoserine is present on residues Ser746, Ser749, and Ser784. Disordered stretches follow at residues 800–1021 and 1051–1076; these read YAST…HQPK and EQPE…STTV. Basic and acidic residues-rich tracts occupy residues 806–827, 870–891, 920–930, 938–948, 970–981, and 996–1021; these read VRPD…RDGL, EQDR…EERA, GSPEEATEREP, HAQDSSKEGKE, GPRETENSEEPT, and PPER…HQPK. The span at 1059 to 1076 shows a compositional bias: polar residues; that stretch reads QRNVTRMGSQPSDPSTTV. At Ser1067 the chain carries Phosphoserine. The III repeat unit spans residues 1135-1421; the sequence is NLLRRFCHYI…IFVALIIITF (287 aa). The helical transmembrane segment at 1150–1168 threads the bilayer; that stretch reads FEMVILVVIALSSIALAAE. Residues 1169–1176 are Extracellular-facing; that stretch reads DPVRTDSF. The helical transmembrane segment at 1177–1201 threads the bilayer; the sequence is RNNALKYMDYIFTGVFTFEMVIKMI. Topologically, residues 1202 to 1215 are cytoplasmic; the sequence is DLGLLLHPGAYFRD. The chain crosses the membrane as a helical span at residues 1216–1240; sequence LWNILDFIVVSGALVAFAFSSFMGG. Topologically, residues 1241–1246 are extracellular; it reads SKGKDI. Residues 1247–1267 traverse the membrane as a helical segment; that stretch reads NTIKSLRVLRVLRPLKTIKRL. Topologically, residues 1268 to 1285 are cytoplasmic; that stretch reads PKLKAVFDCVVNSLKNVL. The chain crosses the membrane as a helical span at residues 1286–1305; sequence NILIVYMLFMFIFAVIAVQL. Residues 1306–1392 lie on the Extracellular side of the membrane; the sequence is FKGKFFYCTD…EQGPSPGFRM (87 aa). Residues 1393 to 1418 form a helical membrane-spanning segment; that stretch reads ELSIFYVVYFVVFPFFFVNIFVALII. The Cytoplasmic portion of the chain corresponds to 1419 to 1473; the sequence is ITFQEQGDKVMSECSLEKNERACIDFAISAKPLTRYMPQNKQSFQYKTWTFVVSP. One copy of the IV repeat lies at 1458 to 1711; the sequence is NKQSFQYKTW…LFVAVIMDNF (254 aa). Residues 1474–1492 traverse the membrane as a helical segment; it reads PFEYFIMAMIALNTVVLMM. Residues 1493 to 1500 lie on the Extracellular side of the membrane; that stretch reads KFYDAPYE. Residues 1501-1525 form a helical membrane-spanning segment; it reads YELMLKCLNIVFTSMFSLECILKII. Residues 1526-1535 are Cytoplasmic-facing; that stretch reads AFGVLNYFRD. Residues 1536-1557 traverse the membrane as a helical segment; the sequence is AWNVFDFVTVLGSITDILVTEI. The Extracellular segment spans residues 1558–1563; the sequence is ANNFIN. A glycan (N-linked (GlcNAc...) asparagine) is linked at Asn1563. A helical membrane pass occupies residues 1564-1582; sequence LSFLRLFRAARLIKLCRQG. At 1583 to 1601 the chain is on the cytoplasmic side; sequence YTIRILLWTFVQSFKALPY. Residues 1602 to 1621 traverse the membrane as a helical segment; it reads VCLLIAMLFFIYAIIGMQVF. The Extracellular segment spans residues 1622–1683; that stretch reads GNIALDDGTS…ANASECGSDF (62 aa). Residue Asn1675 is glycosylated (N-linked (GlcNAc...) asparagine). A helical transmembrane segment spans residues 1684 to 1707; sequence AYFYFVSFIFLCSFLMLNLFVAVI. The Cytoplasmic portion of the chain corresponds to 1708–2336; that stretch reads MDNFEYLTRD…YHHPDQDHWC (629 aa). The EF-hand domain occupies 1724-1759; the sequence is HHLDEFIRVWAEYDPAACGRISYNDMFEMLKHMSPP. Ca(2+)-binding residues include Asp1737, Arg1743, and Asp1748. Residues 1981–2202 form a disordered region; it reads TLRGPDGEPQ…TPRPSITYKT (222 aa). Residues 2048–2062 show a composition bias toward basic residues; sequence SHHHHHRCHRRRDKK. The residue at position 2065 (Ser2065) is a Phosphoserine. The span at 2097 to 2113 shows a compositional bias: basic and acidic residues; the sequence is CRRERKQERGRSQERRQ. Polar residues predominate over residues 2161 to 2177; that stretch reads GSGSVNGSPLMSTSGAS. Phosphoserine occurs at positions 2221, 2230, and 2253.

It belongs to the calcium channel alpha-1 subunit (TC 1.A.1.11) family. CACNA1B subfamily. As to quaternary structure, multisubunit complex consisting of alpha-1, alpha-2, beta and delta subunits in a 1:1:1:1 ratio. The channel activity is directed by the pore-forming and voltage-sensitive alpha-1 subunit. In many cases, this subunit is sufficient to generate voltage-sensitive calcium channel activity. The auxiliary subunits beta and alpha-2/delta linked by a disulfide bridge regulate the channel activity. Interacts with RIMS1. Interacts with FMR1 (via C-terminus); this interaction induces a decrease in the number of presynaptic functional CACNA1B channels at the cell surface. In terms of processing, phosphorylated in vitro by CaM-kinase II, PKA, PKC and CGPK. Central nervous system.

It is found in the membrane. It carries out the reaction Ca(2+)(in) = Ca(2+)(out). Is specifically blocked by omega-conotoxin GVIA. Is specifically blocked by omega-conotoxin MVIIA (ziconotide). Is insensitive to dihydropyridines (DHP). Its function is as follows. Voltage-sensitive calcium channels (VSCC) mediate the entry of calcium ions into excitable cells and are also involved in a variety of calcium-dependent processes, including muscle contraction, hormone or neurotransmitter release, gene expression, cell motility, cell division and cell death. This alpha-1B subunit gives rise to N-type calcium currents. N-type calcium channels belong to the 'high-voltage activated' (HVA) group. They are involved in pain signaling. Calcium channels containing alpha-1B subunit may play a role in directed migration of immature neurons. Mediates Ca(2+) release probability at hippocampal neuronal soma and synaptic terminals. This chain is Voltage-dependent N-type calcium channel subunit alpha-1B (Cacna1b), found in Rattus norvegicus (Rat).